Reading from the N-terminus, the 254-residue chain is Phosphoribosylaminoimidazole-succinocarboxamide synthase (254 aa).

It belongs to the SAICAR synthetase family.

It carries out the reaction 5-amino-1-(5-phospho-D-ribosyl)imidazole-4-carboxylate + L-aspartate + ATP = (2S)-2-[5-amino-1-(5-phospho-beta-D-ribosyl)imidazole-4-carboxamido]succinate + ADP + phosphate + 2 H(+). The protein operates within purine metabolism; IMP biosynthesis via de novo pathway; 5-amino-1-(5-phospho-D-ribosyl)imidazole-4-carboxamide from 5-amino-1-(5-phospho-D-ribosyl)imidazole-4-carboxylate: step 1/2. In Brucella melitensis biotype 2 (strain ATCC 23457), this protein is Phosphoribosylaminoimidazole-succinocarboxamide synthase.